The following is a 296-amino-acid chain: Galectin-3 (296 aa).

The span at 1 to 11 (MADSFSLNDAL) shows a compositional bias: polar residues. Positions 1 to 150 (MADSFSLNDA…PSAPGAYPAA (150 aa)) are disordered. An N-acetylalanine modification is found at A2. 2 positions are modified to phosphoserine; by CK1: S6 and S12. Composition is skewed to low complexity over residues 12–31 (SGSG…NQPA) and 38–47 (GASYPGAYPG). Repeat copies occupy residues 36-44 (YPGASYPGA), 45-53 (YPGQAPPGG), 54-62 (YPGQAPPGG), 63-71 (YPGQAPPGG), 72-80 (YPGQAPPGG), 81-89 (YPGQAPPGG), 90-98 (YPGQAPPGG), and 99-107 (YPGQAPPGT). Residues 36–143 (YPGASYPGAY…AYPPPGQPSA (108 aa)) are 12 X 9 AA tandem repeats of Y-P-G-X(3)-P-G-[GAT]. The segment covering 48-120 (QAPPGGYPGQ…PTAPAYPGPT (73 aa)) has biased composition (pro residues). Residues 108–115 (YPGPTAPA) form a 9; approximate repeat. Repeat 10 spans residues 116 to 124 (YPGPTAPGT). Over residues 121 to 133 (APGTQPGQPSGPG) the composition is skewed to low complexity. The 11; approximate repeat unit spans residues 125–134 (QPGQPSGPGA). Residues 135-143 (YPPPGQPSA) form a 12; approximate repeat. The Galectin domain maps to 164 to 294 (YDLPLPGGVK…DIDLTSASYA (131 aa)). 227-233 (WGKEERQ) provides a ligand contact to a beta-D-galactoside. The short motif at 272–287 (KNLPEISKLGISGDID) is the Nuclear export signal element.

Probably forms homo- or heterodimers. Interacts with DMBT1. Interacts with CD6 and ALCAM. Forms a complex with the ITGA3, ITGB1 and CSPG4. Interacts with LGALS3BP, LYPD3, ZFTRAF1 and UACA. Interacts with TRIM16; this interaction mediates autophagy of damage endomembranes. Interacts with cargo receptor TMED10; the interaction mediates the translocation from the cytoplasm into the ERGIC (endoplasmic reticulum-Golgi intermediate compartment) and thereby secretion. Interacts with and inhibits by binding NCR3/NKp30. The degree of phosphorylation is higher in the cytoplasmic form than in the nuclear form. In protein isolated from a canine kidney cell line, 90% of the phosphate was on Ser-6 and 10% was on Ser-12.

The protein localises to the cytoplasm. It localises to the nucleus. Its subcellular location is the secreted. Functionally, galactose-specific lectin which binds IgE. May mediate with the alpha-3, beta-1 integrin the stimulation by CSPG4 of endothelial cells migration. Together with DMBT1, required for terminal differentiation of columnar epithelial cells during early embryogenesis. In the nucleus: acts as a pre-mRNA splicing factor. Involved in acute inflammatory responses including neutrophil activation and adhesion, chemoattraction of monocytes macrophages, opsonization of apoptotic neutrophils, and activation of mast cells. Together with TRIM16, coordinates the recognition of membrane damage with mobilization of the core autophagy regulators ATG16L1 and BECN1 in response to damaged endomembranes. When secreted, interacts with NK cell-activating receptor NCR3/NKp30 acting as an inhibitory ligand which antagonizes NK cell attack. This chain is Galectin-3 (LGALS3), found in Canis lupus familiaris (Dog).